Here is a 219-residue protein sequence, read N- to C-terminus: MKTETGSNNNNTTVVNMDFDMYPSISGKQQDPVREVVMKYIDYFLPDASGTSAVAIDNKIEQAMDLVKSHLMIAVREEVEVLKERISELMDKINKLELENSILKSNIPQETLQQLQLQLQLAAPPATPAIQAAPAVQSVVAPAAAGQAVQQQAAGAVAVTGVATSPASAVVPTSIPNGSAENGSSAVESAAVSVEQQVQQVTSAAAAAASVVTANGPMS.

Positions 82–103 (LKERISELMDKINKLELENSIL) are leucine-zipper.

This sequence belongs to the TSC-22/Dip/Bun family. As to expression, anterior dorsal follicle cells at stages 10-12 of oogenesis.

The protein localises to the cytoplasm. The protein resides in the nucleus. Functionally, probable transcription factor required for peripheral nervous system morphogenesis, eye development and oogenesis. May be required for the transmission of the dpp signal and for a morphogenetic movement of the medulla in the brain that reorients the second optic lobe relative to the first. Plays a role in determining proper dorsal cell fates leading to the formation of the dorsal appendages. The protein is Protein bunched, class 1/class 3/D/E isoforms (bun) of Drosophila melanogaster (Fruit fly).